The sequence spans 73 residues: Translation initiation factor IF-1 (73 aa).

Positions 1-73 (MPKKDGVIEI…SRGRIVYRYK (73 aa)) constitute an S1-like domain.

It belongs to the IF-1 family. In terms of assembly, component of the 30S ribosomal translation pre-initiation complex which assembles on the 30S ribosome in the order IF-2 and IF-3, IF-1 and N-formylmethionyl-tRNA(fMet); mRNA recruitment can occur at any time during PIC assembly.

The protein resides in the cytoplasm. Functionally, one of the essential components for the initiation of protein synthesis. Stabilizes the binding of IF-2 and IF-3 on the 30S subunit to which N-formylmethionyl-tRNA(fMet) subsequently binds. Helps modulate mRNA selection, yielding the 30S pre-initiation complex (PIC). Upon addition of the 50S ribosomal subunit IF-1, IF-2 and IF-3 are released leaving the mature 70S translation initiation complex. The chain is Translation initiation factor IF-1 from Kineococcus radiotolerans (strain ATCC BAA-149 / DSM 14245 / SRS30216).